The following is a 389-amino-acid chain: Methylthioribose-1-phosphate isomerase (389 aa).

The active-site Proton donor is the Asp-258.

Belongs to the eIF-2B alpha/beta/delta subunits family. MtnA subfamily.

It is found in the cytoplasm. Its subcellular location is the nucleus. It carries out the reaction 5-(methylsulfanyl)-alpha-D-ribose 1-phosphate = 5-(methylsulfanyl)-D-ribulose 1-phosphate. It participates in amino-acid biosynthesis; L-methionine biosynthesis via salvage pathway; L-methionine from S-methyl-5-thio-alpha-D-ribose 1-phosphate: step 1/6. Its function is as follows. Catalyzes the interconversion of methylthioribose-1-phosphate (MTR-1-P) into methylthioribulose-1-phosphate (MTRu-1-P). The protein is Methylthioribose-1-phosphate isomerase of Chaetomium globosum (strain ATCC 6205 / CBS 148.51 / DSM 1962 / NBRC 6347 / NRRL 1970) (Soil fungus).